The following is a 389-amino-acid chain: Chorismate synthase (389 aa).

The NADP(+) site is built by arginine 40 and arginine 46. Residues 131–133 (RSS), 252–253 (NA), glycine 297, 312–316 (KPIPT), and arginine 338 contribute to the FMN site.

Belongs to the chorismate synthase family. In terms of assembly, homotetramer. Requires FMNH2 as cofactor.

It carries out the reaction 5-O-(1-carboxyvinyl)-3-phosphoshikimate = chorismate + phosphate. The protein operates within metabolic intermediate biosynthesis; chorismate biosynthesis; chorismate from D-erythrose 4-phosphate and phosphoenolpyruvate: step 7/7. Its function is as follows. Catalyzes the anti-1,4-elimination of the C-3 phosphate and the C-6 proR hydrogen from 5-enolpyruvylshikimate-3-phosphate (EPSP) to yield chorismate, which is the branch point compound that serves as the starting substrate for the three terminal pathways of aromatic amino acid biosynthesis. This reaction introduces a second double bond into the aromatic ring system. The protein is Chorismate synthase of Lactiplantibacillus plantarum (strain ATCC BAA-793 / NCIMB 8826 / WCFS1) (Lactobacillus plantarum).